The following is a 378-amino-acid chain: Probable pectin lyase A (378 aa).

An N-terminal signal peptide occupies residues methionine 1 to alanine 18. Cystine bridges form between cysteine 81–cysteine 100 and cysteine 90–cysteine 224. The active site involves arginine 254. Cysteine 321 and cysteine 329 are oxidised to a cystine.

It belongs to the polysaccharide lyase 1 family.

The protein resides in the secreted. It catalyses the reaction Eliminative cleavage of (1-&gt;4)-alpha-D-galacturonan methyl ester to give oligosaccharides with 4-deoxy-6-O-methyl-alpha-D-galact-4-enuronosyl groups at their non-reducing ends.. Its function is as follows. Pectinolytic enzymes consist of four classes of enzymes: pectin lyase, polygalacturonase, pectin methylesterase and rhamnogalacturonase. Among pectinolytic enzymes, pectin lyase is the most important in depolymerization of pectin, since it cleaves internal glycosidic bonds of highly methylated pectins. This chain is Probable pectin lyase A (pelA), found in Aspergillus clavatus (strain ATCC 1007 / CBS 513.65 / DSM 816 / NCTC 3887 / NRRL 1 / QM 1276 / 107).